A 310-amino-acid polypeptide reads, in one-letter code: MKITTKVLIIGSGPAGLSAAIYTARSALKPILINGMQPGGQLTMTTDVENYPGFAETIQGPWLMEQMSMQAKNVGTEIISDYVERVDLSKRPFKIFTGTGNEYEADSIIICTGAESKWLGIASEQEFRGFGVSSCAICDGFFFKNQEIVVVGGGNSALEEALYLTNHANKVTVVHRRNSFRAEKILQDRLFKNPKISVIWDHIIDEIVGSNKPKAVTGVKIQNVYTNEINLVNCSGVFIAIGHAPNTALFKGQIAIDDDNYIVTQSGSTRTNVEGVFAAGDVQDKIYRQAVTAAASGCMAALEVAKFLNK.

34 to 41 (NGMQPGGQ) serves as a coordination point for FAD. Cys135 and Cys138 form a disulfide bridge. 281-290 (DVQDKIYRQA) is a binding site for FAD.

This sequence belongs to the class-II pyridine nucleotide-disulfide oxidoreductase family. Homodimer. FAD is required as a cofactor.

Its subcellular location is the cytoplasm. The enzyme catalyses [thioredoxin]-dithiol + NADP(+) = [thioredoxin]-disulfide + NADPH + H(+). In Rickettsia prowazekii (strain Madrid E), this protein is Thioredoxin reductase (trxB).